The following is a 445-amino-acid chain: MHDIKWIREEPEALVRALVRRQVAKDEAVALRDKLLSLDTARRETLTKLEGLLARRNAASKEIGQAKAAKDEARAAALMDEVAKLKVDVPELEQSAKAIEGELDGLLAAIPNVPLESVPEGKDEHDNVELKVVGTKRNYAFTPKQHFELGEALGLMDFETASKLSGARFVVNKGPLARLERALGQFFLDMHVEQHGYTEVNPPLLVRDETMYGTAQLPKFFDDQFAVYAGSTQRAIGDETDAERYWLIPTAEVPLTNLVRDSILSEDELPLRFTANTPCFRAEAGSAGRDTRGMIRQHQFTKVEMVSITTPETSEEEHHRMLACAEAVLQKLDLHYRVVTLCTGDMGFASRKTFDIEVWLPGQNAYREISSCSVCGDFQARRMNARYRPAEGKGPRFVHTLNGSGVAVGRALVAVLETYQQEDGSIVVPDVLQSYMGGVTVIAKA.

Residue 250–252 (TAE) coordinates L-serine. Residue 281–283 (RAE) coordinates ATP. Position 304 (glutamate 304) interacts with L-serine. 368–371 (EISS) provides a ligand contact to ATP. Residue serine 404 participates in L-serine binding.

Belongs to the class-II aminoacyl-tRNA synthetase family. Type-1 seryl-tRNA synthetase subfamily. In terms of assembly, homodimer. The tRNA molecule binds across the dimer.

The protein resides in the cytoplasm. It carries out the reaction tRNA(Ser) + L-serine + ATP = L-seryl-tRNA(Ser) + AMP + diphosphate + H(+). The catalysed reaction is tRNA(Sec) + L-serine + ATP = L-seryl-tRNA(Sec) + AMP + diphosphate + H(+). It participates in aminoacyl-tRNA biosynthesis; selenocysteinyl-tRNA(Sec) biosynthesis; L-seryl-tRNA(Sec) from L-serine and tRNA(Sec): step 1/1. Catalyzes the attachment of serine to tRNA(Ser). Is also able to aminoacylate tRNA(Sec) with serine, to form the misacylated tRNA L-seryl-tRNA(Sec), which will be further converted into selenocysteinyl-tRNA(Sec). The protein is Serine--tRNA ligase of Azorhizobium caulinodans (strain ATCC 43989 / DSM 5975 / JCM 20966 / LMG 6465 / NBRC 14845 / NCIMB 13405 / ORS 571).